The chain runs to 294 residues: Diaminopimelate epimerase (294 aa).

Substrate-binding residues include asparagine 13, glutamine 46, and asparagine 69. Cysteine 78 serves as the catalytic Proton donor. Residues 79-80 (GN), asparagine 173, asparagine 206, and 224-225 (ER) contribute to the substrate site. Cysteine 233 functions as the Proton acceptor in the catalytic mechanism. 234 to 235 (GT) serves as a coordination point for substrate.

It belongs to the diaminopimelate epimerase family. As to quaternary structure, homodimer.

It is found in the cytoplasm. The enzyme catalyses (2S,6S)-2,6-diaminopimelate = meso-2,6-diaminopimelate. It participates in amino-acid biosynthesis; L-lysine biosynthesis via DAP pathway; DL-2,6-diaminopimelate from LL-2,6-diaminopimelate: step 1/1. Functionally, catalyzes the stereoinversion of LL-2,6-diaminopimelate (L,L-DAP) to meso-diaminopimelate (meso-DAP), a precursor of L-lysine and an essential component of the bacterial peptidoglycan. In Variovorax paradoxus (strain S110), this protein is Diaminopimelate epimerase.